Reading from the N-terminus, the 238-residue chain is MKELDLDAGNSGLKWRLVESGRVIDRGIIIYGANAQKWSMPTKGACRAFVSSVSSKEVDDAIREVLKDIKDVFWAKTASSYGSLVNAYADYASLGVDRWLALIAAYSKYPEDLCVIDCGTAVTVDYVDKFGVHKGGYIAPGGALMLKSLNVNTAALKGTYGYDSELIPGSSTRECIERGVYYMQKAFVLSVARRCAESRIVCTGGGVKALLGNDEAYTYVEDLVLDGLRIVANAVPVN.

7 to 14 (DAGNSGLK) is a binding site for ATP. Residues Tyr-88 and 95–98 (GVDR) contribute to the substrate site. Asp-97 (proton acceptor) is an active-site residue. Asp-117 contributes to the K(+) binding site. An ATP-binding site is contributed by Thr-120. Thr-172 is a substrate binding site.

The protein belongs to the type III pantothenate kinase family. Homodimer. NH4(+) serves as cofactor. Requires K(+) as cofactor.

Its subcellular location is the cytoplasm. The enzyme catalyses (R)-pantothenate + ATP = (R)-4'-phosphopantothenate + ADP + H(+). It participates in cofactor biosynthesis; coenzyme A biosynthesis; CoA from (R)-pantothenate: step 1/5. Its function is as follows. Catalyzes the phosphorylation of pantothenate (Pan), the first step in CoA biosynthesis. The chain is Type III pantothenate kinase from Hahella chejuensis (strain KCTC 2396).